Consider the following 192-residue polypeptide: Thymidine kinase (192 aa).

ATP is bound by residues 9-16 (GAMNSGKS) and 85-88 (DEVQ). Catalysis depends on Glu-86, which acts as the Proton acceptor. Residues Cys-143, Cys-146, Cys-181, and Cys-184 each coordinate Zn(2+).

This sequence belongs to the thymidine kinase family. In terms of assembly, homotetramer.

The protein resides in the cytoplasm. It carries out the reaction thymidine + ATP = dTMP + ADP + H(+). This is Thymidine kinase from Shouchella clausii (strain KSM-K16) (Alkalihalobacillus clausii).